The sequence spans 151 residues: Ribosome maturation factor RimP (151 aa).

The protein belongs to the RimP family.

It is found in the cytoplasm. Its function is as follows. Required for maturation of 30S ribosomal subunits. This is Ribosome maturation factor RimP from Shewanella oneidensis (strain ATCC 700550 / JCM 31522 / CIP 106686 / LMG 19005 / NCIMB 14063 / MR-1).